Consider the following 244-residue polypeptide: Triosephosphate isomerase (244 aa).

9–11 provides a ligand contact to substrate; that stretch reads NWK. Catalysis depends on H93, which acts as the Electrophile. E161 serves as the catalytic Proton acceptor. Residues G167, S206, and 227-228 contribute to the substrate site; that span reads GG.

This sequence belongs to the triosephosphate isomerase family. As to quaternary structure, homodimer.

The protein localises to the cytoplasm. It carries out the reaction D-glyceraldehyde 3-phosphate = dihydroxyacetone phosphate. It participates in carbohydrate biosynthesis; gluconeogenesis. Its pathway is carbohydrate degradation; glycolysis; D-glyceraldehyde 3-phosphate from glycerone phosphate: step 1/1. In terms of biological role, involved in the gluconeogenesis. Catalyzes stereospecifically the conversion of dihydroxyacetone phosphate (DHAP) to D-glyceraldehyde-3-phosphate (G3P). The sequence is that of Triosephosphate isomerase from Deinococcus geothermalis (strain DSM 11300 / CIP 105573 / AG-3a).